The chain runs to 338 residues: Acyl-CoA-binding domain-containing protein 1 (338 aa).

A helical; Signal-anchor membrane pass occupies residues 11–31; it reads IIFGLIFAYLLAKLISILLAF. Asparagine 35 and asparagine 41 each carry an N-linked (GlcNAc...) asparagine glycan. The tract at residues 69–89 is disordered; that stretch reads AEQGSLRGDEDESDDDDWEGV. Residues 77–89 are compositionally biased toward acidic residues; the sequence is DEDESDDDDWEGV. In terms of domain architecture, ACB spans 94–184; that stretch reads LDEAFSAATA…VTQLYPAWVE (91 aa). An acyl-CoA contacts are provided by residues 126-130, lysine 152, and tyrosine 171; that span reads YGLYK. Asparagine 191 is a glycosylation site (N-linked (GlcNAc...) asparagine). ANK repeat units follow at residues 217-246, 250-279, 283-312, and 316-338; these read LKID…PVNA, EGRT…DVNA, EGQT…DTTI, and DGNS…KDSN.

It belongs to the ACBP family. Interacts with RAP2-12. Binds to SMO1-1 and SMO1-2. Post-translationally, glycosylated. In seeds, localized in the outer integument. In terms of tissue distribution, expressed at low levels in roots, stems, leaves, flowers, and siliques, especially within seeds.

The protein localises to the cell membrane. It is found in the secreted. The protein resides in the cell wall. Its subcellular location is the endoplasmic reticulum membrane. Binds medium- and long-chain acyl-CoA esters with very high affinity. Can interact in vitro with arachidonyl-CoA, barely with oleoyl-CoA, but not with palmitoyl-CoA. Confers tolerance and binds to lead ions Pb(2+), probably by promoting lead translocation from roots to shoots. May function as an intracellular carrier of acyl-CoA esters. Modulates negatively sterol synthesis during embryogenesis and gametophytes development via interactions with SMO1-1 and SMO1-2; sterols serve as lipid modulators for gene expression of homeodomain-leucine zipper IV transcription factors. This chain is Acyl-CoA-binding domain-containing protein 1, found in Arabidopsis thaliana (Mouse-ear cress).